We begin with the raw amino-acid sequence, 120 residues long: Large ribosomal subunit protein uL22 (120 aa).

It belongs to the universal ribosomal protein uL22 family. Part of the 50S ribosomal subunit.

This protein binds specifically to 23S rRNA; its binding is stimulated by other ribosomal proteins, e.g. L4, L17, and L20. It is important during the early stages of 50S assembly. It makes multiple contacts with different domains of the 23S rRNA in the assembled 50S subunit and ribosome. In terms of biological role, the globular domain of the protein is located near the polypeptide exit tunnel on the outside of the subunit, while an extended beta-hairpin is found that lines the wall of the exit tunnel in the center of the 70S ribosome. In Corynebacterium urealyticum (strain ATCC 43042 / DSM 7109), this protein is Large ribosomal subunit protein uL22.